The primary structure comprises 721 residues: MAEKFESLMNIHGFDLGSRYMDLKPLGCGGNGLVFSAVDNDCDKRVAIKKIVLTDPQSVKHALREIKIIRRLDHDNIVKVFEILGPSGSQLTDDVGSLTELNSVYIVQEYMETDLANVLEQGPLLEEHARLFMYQLLRGLKYIHSANVLHRDLKPANLFINTEDLVLKIGDFGLARIMDPHYSHKGHLSEGLVTKWYRSPRLLLSPNNYTKAIDMWAAGCIFAEMLTGKTLFAGAHELEQMQLILESIPVVHEEDRQELLSVIPVYIRNDMTEPHKPLTQLLPGISREALDFLEQILTFSPMDRLTAEEALSHPYMSIYSFPMDEPISSHPFHIEDEVDDILLMDETHSHIYNWERYHDCQFSEHDWPVHNNFDIDEVQLDPRALSDVTDEEEVQVDPRKYLDGDREKYLEDPAFDTNYSTEPCWQYSDHHENKYCDLECGHTCNYKTRSSSYLDNLVWRESEVNHYYEPKLIIDLSNWKEQSKEKSDKKGKSKCERNGLVKAQIALEEASQQLAGKEREKNQGFDFDSFIAGTIQLSSQHEPTDVVDKLNDLNSSVSQLELKSLISKSVSQEKQEKGMANLAQLEALYQSSWDSQFVNGGEDCFFINQFCEVRKDEQVEKENTYTSYLDKFFSRKEDTEMLETEPVEDGKLGERGHEEGFLNNSGEFLFNKQLESIGIPQFHSPVGSPLKSIQATLTPSAMKSSPQIPHQTYSSILKHLN.

Met-1 is covalently cross-linked (Peptide (Met-Gly) (interchain with G-Cter in ubiquitin)). Positions 20–316 constitute a Protein kinase domain; sequence YMDLKPLGCG…AEEALSHPYM (297 aa). ATP is bound by residues 26 to 34 and Lys-49; that span reads LGCGGNGLV. The Proton acceptor role is filled by Asp-152. Ser-189 carries the phosphoserine; by PAK1, PAK2 and PAK3 modification. The SEG motif signature appears at 189-191; the sequence is SEG. An FRIEDE motif motif is present at residues 332-337; the sequence is FHIEDE. A phosphoserine mark is found at Ser-386, Ser-452, Ser-556, Ser-558, Ser-665, and Ser-684. The span at 701–715 shows a compositional bias: polar residues; sequence AMKSSPQIPHQTYSS. Residues 701-721 form a disordered region; it reads AMKSSPQIPHQTYSSILKHLN.

Belongs to the protein kinase superfamily. CMGC Ser/Thr protein kinase family. MAP kinase subfamily. In terms of assembly, heterodimer with ERK4/MAPK4. Interacts with (via FRIEDE motif) MAPKAPK5. Interacts with UBE3A; this interaction may be indirect and mediated by HERC2, possibly via HERC2 interaction with NEURL4. Mg(2+) is required as a cofactor. Post-translationally, phosphorylated at Ser-189 by PAK1, PAK2 and PAK3 resulting in catalytic activation. Phosphorylated by MAPKAPK5 at other sites. In terms of processing, ubiquitination at Met-1 leads to degradation by the proteasome pathway.

It is found in the cytoplasm. It localises to the nucleus. The catalysed reaction is L-seryl-[protein] + ATP = O-phospho-L-seryl-[protein] + ADP + H(+). The enzyme catalyses L-threonyl-[protein] + ATP = O-phospho-L-threonyl-[protein] + ADP + H(+). With respect to regulation, activated by phosphorylation at Ser-189. Atypical MAPK protein. Phosphorylates microtubule-associated protein 2 (MAP2) and MAPKAPK5. The precise role of the complex formed with MAPKAPK5 is still unclear, but the complex follows a complex set of phosphorylation events: upon interaction with atypical MAPKAPK5, ERK3/MAPK6 is phosphorylated at Ser-189 and then mediates phosphorylation and activation of MAPKAPK5, which in turn phosphorylates ERK3/MAPK6. May promote entry in the cell cycle. This is Mitogen-activated protein kinase 6 (MAPK6) from Pongo abelii (Sumatran orangutan).